The chain runs to 306 residues: LysM and putative peptidoglycan-binding domain-containing protein 3 (306 aa).

The Extracellular portion of the chain corresponds to 1–217 (MAGRHQNRSF…PYYGADWGIG (217 aa)). N7 carries an N-linked (GlcNAc...) asparagine glycan. Phosphoserine is present on S55. The 45-residue stretch at 65-109 (LTKDIQEGDTLNAIALQYCCTVADIKRVNNLISDQDFFALRSIKI) folds into the LysM domain. A helical transmembrane segment spans residues 218–238 (WWTAVVIMLIVGIITPVFYLL). Topologically, residues 239–306 (YYEILAKVDV…SQSPAAQQET (68 aa)) are cytoplasmic.

Its subcellular location is the cell membrane. The protein localises to the golgi apparatus. Functionally, essential for Golgi structural integrity. The protein is LysM and putative peptidoglycan-binding domain-containing protein 3 (LYSMD3) of Homo sapiens (Human).